We begin with the raw amino-acid sequence, 2038 residues long: HEAT repeat-containing protein 5A (2038 aa).

HEAT repeat units follow at residues 850–887 (EVRR…VADD) and 1082–1119 (LLRR…AAAD). The disordered stretch occupies residues 1646-1668 (RSAEVDDGASEKETLPEFGEGKD). Serine 1647 is subject to Phosphoserine.

This sequence belongs to the HEATR5 family.

This Mus musculus (Mouse) protein is HEAT repeat-containing protein 5A (Heatr5a).